We begin with the raw amino-acid sequence, 174 residues long: Crossover junction endodeoxyribonuclease RuvC (174 aa).

Residues D8, E68, and D140 contribute to the active site. Positions 8, 68, and 140 each coordinate Mg(2+).

This sequence belongs to the RuvC family. In terms of assembly, homodimer which binds Holliday junction (HJ) DNA. The HJ becomes 2-fold symmetrical on binding to RuvC with unstacked arms; it has a different conformation from HJ DNA in complex with RuvA. In the full resolvosome a probable DNA-RuvA(4)-RuvB(12)-RuvC(2) complex forms which resolves the HJ. It depends on Mg(2+) as a cofactor.

It is found in the cytoplasm. The catalysed reaction is Endonucleolytic cleavage at a junction such as a reciprocal single-stranded crossover between two homologous DNA duplexes (Holliday junction).. In terms of biological role, the RuvA-RuvB-RuvC complex processes Holliday junction (HJ) DNA during genetic recombination and DNA repair. Endonuclease that resolves HJ intermediates. Cleaves cruciform DNA by making single-stranded nicks across the HJ at symmetrical positions within the homologous arms, yielding a 5'-phosphate and a 3'-hydroxyl group; requires a central core of homology in the junction. The consensus cleavage sequence is 5'-(A/T)TT(C/G)-3'. Cleavage occurs on the 3'-side of the TT dinucleotide at the point of strand exchange. HJ branch migration catalyzed by RuvA-RuvB allows RuvC to scan DNA until it finds its consensus sequence, where it cleaves and resolves the cruciform DNA. The polypeptide is Crossover junction endodeoxyribonuclease RuvC (Legionella pneumophila (strain Paris)).